We begin with the raw amino-acid sequence, 329 residues long: Malate dehydrogenase (329 aa).

12 to 18 provides a ligand contact to NAD(+); that stretch reads GAAGQIG. Substrate-binding residues include Arg-93 and Arg-99. Residues Asn-106, Gln-113, and 130–132 contribute to the NAD(+) site; that span reads VGN. Residues Asn-132 and Arg-163 each coordinate substrate. His-188 (proton acceptor) is an active-site residue.

This sequence belongs to the LDH/MDH superfamily. MDH type 2 family.

The enzyme catalyses (S)-malate + NAD(+) = oxaloacetate + NADH + H(+). Catalyzes the reversible oxidation of malate to oxaloacetate. The polypeptide is Malate dehydrogenase (Frankia alni (strain DSM 45986 / CECT 9034 / ACN14a)).